The sequence spans 971 residues: Putative helicase 184R (971 aa).

The tract at residues 506-528 is disordered; it reads GYEPSDSGFGFDDDDSASTSGGK. The SF3 helicase domain maps to 624–807; that stretch reads PKVIKMLNFF…FKDSIDDISL (184 aa). ATP is bound at residue 668 to 675; that stretch reads GEGDNGKS.

It belongs to the IIV-6 184R family.

The protein is Putative helicase 184R of Acheta domesticus (House cricket).